Reading from the N-terminus, the 208-residue chain is 3-isopropylmalate dehydratase small subunit (208 aa).

It belongs to the LeuD family. LeuD type 1 subfamily. As to quaternary structure, heterodimer of LeuC and LeuD.

The catalysed reaction is (2R,3S)-3-isopropylmalate = (2S)-2-isopropylmalate. It functions in the pathway amino-acid biosynthesis; L-leucine biosynthesis; L-leucine from 3-methyl-2-oxobutanoate: step 2/4. Catalyzes the isomerization between 2-isopropylmalate and 3-isopropylmalate, via the formation of 2-isopropylmaleate. The protein is 3-isopropylmalate dehydratase small subunit of Gluconobacter oxydans (strain 621H) (Gluconobacter suboxydans).